The primary structure comprises 268 residues: Tryptophan synthase alpha chain (268 aa).

Active-site proton acceptor residues include E49 and D60.

The protein belongs to the TrpA family. As to quaternary structure, tetramer of two alpha and two beta chains.

The catalysed reaction is (1S,2R)-1-C-(indol-3-yl)glycerol 3-phosphate + L-serine = D-glyceraldehyde 3-phosphate + L-tryptophan + H2O. Its pathway is amino-acid biosynthesis; L-tryptophan biosynthesis; L-tryptophan from chorismate: step 5/5. Functionally, the alpha subunit is responsible for the aldol cleavage of indoleglycerol phosphate to indole and glyceraldehyde 3-phosphate. This is Tryptophan synthase alpha chain from Escherichia coli O157:H7.